The chain runs to 310 residues: tRNA-dihydrouridine(16) synthase (310 aa).

FMN is bound by residues 7–9 (PMQ) and Q68. Catalysis depends on C98, which acts as the Proton donor. FMN-binding positions include K139, 200 to 202 (NGE), and 224 to 225 (GR).

Belongs to the Dus family. DusC subfamily. Requires FMN as cofactor.

The enzyme catalyses 5,6-dihydrouridine(16) in tRNA + NADP(+) = uridine(16) in tRNA + NADPH + H(+). It carries out the reaction 5,6-dihydrouridine(16) in tRNA + NAD(+) = uridine(16) in tRNA + NADH + H(+). Catalyzes the synthesis of 5,6-dihydrouridine (D), a modified base found in the D-loop of most tRNAs, via the reduction of the C5-C6 double bond in target uridines. Specifically modifies U16 in tRNAs. This is tRNA-dihydrouridine(16) synthase from Haemophilus influenzae (strain ATCC 51907 / DSM 11121 / KW20 / Rd).